The chain runs to 365 residues: MRVLSLFLKDFRNYTDLRLELGPEMNSIFGLNAQGKTNLLEALYILSLGRSFRTSRLTDAIRFGASHFFIEAVFSHKEVFHTLSIQVDKKGKKILFDGAPITKLSELVGLFPVILFSIKDIAIIEGSPSERRRFLDLLLAQASDKYTEHISLYHKALDQRNASIKAQNQKAISAWNSPLIAYGSLVAFLRNECTKKLNTIFQTLWDNTLKETLSLRYESSLITEESPTLNDIASNYYEQLRIANTKDLDLGYTMVGPHRDELLLTINDLPVAKFSSEGQKHSLLAVLRFAECVYLQEEFCIHPILCMDDIHACLDQQRLDQLLQLSNSLGQVVTTSTICPDHRSTTSCIFHVTQAQVSLVAPQSL.

Residue 30 to 37 (GLNAQGKT) participates in ATP binding.

Belongs to the RecF family.

Its subcellular location is the cytoplasm. Its function is as follows. The RecF protein is involved in DNA metabolism; it is required for DNA replication and normal SOS inducibility. RecF binds preferentially to single-stranded, linear DNA. It also seems to bind ATP. The polypeptide is DNA replication and repair protein RecF (Chlamydia trachomatis serovar A (strain ATCC VR-571B / DSM 19440 / HAR-13)).